The primary structure comprises 266 residues: GTP cyclohydrolase III (266 aa).

It belongs to the archaeal-type GTP cyclohydrolase family.

It catalyses the reaction GTP + 3 H2O = 2-amino-5-formylamino-6-(5-phospho-D-ribosylamino)pyrimidin-4(3H)-one + 2 phosphate + 2 H(+). Catalyzes the formation of 2-amino-5-formylamino-6-ribofuranosylamino-4(3H)-pyrimidinone ribonucleotide monophosphate and inorganic phosphate from GTP. Also has an independent pyrophosphate phosphohydrolase activity. This is GTP cyclohydrolase III from Methanococcus maripaludis (strain C7 / ATCC BAA-1331).